The sequence spans 154 residues: Large ribosomal subunit protein uL11 (154 aa).

The protein belongs to the universal ribosomal protein uL11 family. Part of the ribosomal stalk of the 50S ribosomal subunit. Interacts with L10 and the large rRNA to form the base of the stalk. L10 forms an elongated spine to which L12 dimers bind in a sequential fashion forming a multimeric L10(L12)X complex. Post-translationally, one or more lysine residues are methylated.

Forms part of the ribosomal stalk which helps the ribosome interact with GTP-bound translation factors. This chain is Large ribosomal subunit protein uL11, found in Leuconostoc mesenteroides subsp. mesenteroides (strain ATCC 8293 / DSM 20343 / BCRC 11652 / CCM 1803 / JCM 6124 / NCDO 523 / NBRC 100496 / NCIMB 8023 / NCTC 12954 / NRRL B-1118 / 37Y).